The primary structure comprises 336 residues: tRNA-splicing endonuclease (336 aa).

Catalysis depends on residues tyrosine 271, histidine 282, and lysine 313.

The protein belongs to the tRNA-intron endonuclease family. Archaeal long subfamily. Homodimer.

It carries out the reaction pretRNA = a 3'-half-tRNA molecule with a 5'-OH end + a 5'-half-tRNA molecule with a 2',3'-cyclic phosphate end + an intron with a 2',3'-cyclic phosphate and a 5'-hydroxyl terminus.. Endonuclease that removes tRNA introns. Cleaves pre-tRNA at the 5'- and 3'-splice sites to release the intron. The products are an intron and two tRNA half-molecules bearing 2',3' cyclic phosphate and 5'-OH termini. Recognizes a pseudosymmetric substrate in which 2 bulged loops of 3 bases are separated by a stem of 4 bp. The polypeptide is tRNA-splicing endonuclease (Natronomonas pharaonis (strain ATCC 35678 / DSM 2160 / CIP 103997 / JCM 8858 / NBRC 14720 / NCIMB 2260 / Gabara) (Halobacterium pharaonis)).